Consider the following 207-residue polypeptide: Large ribosomal subunit protein uL4 (207 aa).

The disordered stretch occupies residues 62 to 85 (KKPFKQKGTGQARQGCRRAPQYPG).

The protein belongs to the universal ribosomal protein uL4 family. Part of the 50S ribosomal subunit.

In terms of biological role, one of the primary rRNA binding proteins, this protein initially binds near the 5'-end of the 23S rRNA. It is important during the early stages of 50S assembly. It makes multiple contacts with different domains of the 23S rRNA in the assembled 50S subunit and ribosome. Forms part of the polypeptide exit tunnel. The polypeptide is Large ribosomal subunit protein uL4 (Geobacter sp. (strain M21)).